The following is a 795-amino-acid chain: Antibiotic resistant DNA gyrase subunit B (795 aa).

Positions Ser421–Pro536 constitute a Toprim domain. Residues Glu427, Asp501, and Asp503 each contribute to the Mg(2+) site.

The protein belongs to the type II topoisomerase GyrB family. Heterotetramer, composed of two GyrA and two GyrB chains. In the heterotetramer, GyrA contains the active site tyrosine that forms a transient covalent intermediate with DNA, while GyrB binds cofactors and catalyzes ATP hydrolysis. Mg(2+) is required as a cofactor. It depends on Mn(2+) as a cofactor. The cofactor is Ca(2+).

It localises to the cytoplasm. It carries out the reaction ATP-dependent breakage, passage and rejoining of double-stranded DNA.. Its function is as follows. A type II topoisomerase that negatively supercoils closed circular double-stranded (ds) DNA in an ATP-dependent manner to modulate DNA topology and maintain chromosomes in an underwound state. Negative supercoiling favors strand separation, and DNA replication, transcription, recombination and repair, all of which involve strand separation. Also able to catalyze the interconversion of other topological isomers of dsDNA rings, including catenanes and knotted rings. Type II topoisomerases break and join 2 DNA strands simultaneously in an ATP-dependent manner. The polypeptide is Antibiotic resistant DNA gyrase subunit B (Neisseria gonorrhoeae).